A 277-amino-acid chain; its full sequence is 3-methyl-2-oxobutanoate hydroxymethyltransferase (277 aa).

2 residues coordinate Mg(2+): Asp53 and Asp96. 3-methyl-2-oxobutanoate contacts are provided by residues 53-54, Asp96, and Lys126; that span reads DS. Glu128 provides a ligand contact to Mg(2+). The active-site Proton acceptor is Glu195.

It belongs to the PanB family. In terms of assembly, homodecamer; pentamer of dimers. It depends on Mg(2+) as a cofactor.

It is found in the cytoplasm. The catalysed reaction is 3-methyl-2-oxobutanoate + (6R)-5,10-methylene-5,6,7,8-tetrahydrofolate + H2O = 2-dehydropantoate + (6S)-5,6,7,8-tetrahydrofolate. It functions in the pathway cofactor biosynthesis; (R)-pantothenate biosynthesis; (R)-pantoate from 3-methyl-2-oxobutanoate: step 1/2. Its function is as follows. Catalyzes the reversible reaction in which hydroxymethyl group from 5,10-methylenetetrahydrofolate is transferred onto alpha-ketoisovalerate to form ketopantoate. The polypeptide is 3-methyl-2-oxobutanoate hydroxymethyltransferase (Prosthecochloris aestuarii (strain DSM 271 / SK 413)).